The sequence spans 249 residues: tRNA (guanine-N(1)-)-methyltransferase (249 aa).

S-adenosyl-L-methionine is bound by residues G113 and 133 to 138 (IGDFVL).

Belongs to the RNA methyltransferase TrmD family. Homodimer.

The protein localises to the cytoplasm. It catalyses the reaction guanosine(37) in tRNA + S-adenosyl-L-methionine = N(1)-methylguanosine(37) in tRNA + S-adenosyl-L-homocysteine + H(+). Functionally, specifically methylates guanosine-37 in various tRNAs. In Aliivibrio fischeri (strain ATCC 700601 / ES114) (Vibrio fischeri), this protein is tRNA (guanine-N(1)-)-methyltransferase.